The following is a 294-amino-acid chain: Transcription factor nsy-7 (294 aa).

Disordered regions lie at residues 43–119 and 167–191; these read CNLR…TPDL and LRLP…DSPL. 2 stretches are compositionally biased toward polar residues: residues 52–63 and 81–115; these read DQPTTSSNSVKE and RRQS…SNDP. The homeobox; atypical DNA-binding region spans 192–232; that stretch reads QTRMKGWQREYIKEVIKDSHYPTEEELRDIEQKCDLSRKQI. Residues 238–274 are disordered; it reads KRLTNPNRKPRVNHHDEKRKEQEERDSLADPDDDMIN. Basic and acidic residues predominate over residues 250 to 265; the sequence is NHHDEKRKEQEERDSL.

In terms of tissue distribution, expressed widely, including gut, the amphid sheath glial cells, and head and tail neurons including AWC, ASE, and ASH. Expressed in AWC (ON) olfactory neuron but not AWC (OFF).

The protein resides in the nucleus. In terms of biological role, transcriptional regulator which binds DNA consensus sequence 5'-CCTTAAC-3'. Plays a role in establishing and maintaining asymmetric cell fates in chemosensory AWC neurons during larval neuronal development. This is achieved by repressing the expression of multiple AWC (OFF) genes, including srsx-3 and hlh-11 in the AWC (ON) neuron. Activates expression of sox-2 in the AWC (ON) neuron. This Caenorhabditis elegans protein is Transcription factor nsy-7.